The primary structure comprises 308 residues: MSAQKPGLHPRNRHHSRYDLATLCQVNPELRQFLTLTPAGEQSVDFANPLAVKALNKALLAHFYAVANWDIPDGFLCPPVPGRADYIHHLADLLAEASGTIPANASILDIGVGANCIYPLIGVHEYGWRFTGSETSSQALSSAQAIISSNPGLNRAIRLRRQKESGAIFNGIIHKNEQYDATLCNPPFHDSAAAARAGSERKRRNLGLNKDDALNFGGQQQELWCEGGEVTFIKKMIEESKGFAKQVMWFTSLVSRGENLPPLYRALTDVGAVKVVKKEMAQGQKQSRFIAWTFMNDEQRRRFVNRQR.

The protein belongs to the methyltransferase superfamily. METTL16/RlmF family.

The protein resides in the cytoplasm. The enzyme catalyses adenosine(1618) in 23S rRNA + S-adenosyl-L-methionine = N(6)-methyladenosine(1618) in 23S rRNA + S-adenosyl-L-homocysteine + H(+). Functionally, specifically methylates the adenine in position 1618 of 23S rRNA. This Escherichia coli (strain K12 / MC4100 / BW2952) protein is Ribosomal RNA large subunit methyltransferase F.